A 316-amino-acid polypeptide reads, in one-letter code: Ribosomal RNA small subunit methyltransferase H (316 aa).

Residues 35 to 37, D55, F79, D101, and Q108 each bind S-adenosyl-L-methionine; that span reads GGH.

This sequence belongs to the methyltransferase superfamily. RsmH family.

It is found in the cytoplasm. The catalysed reaction is cytidine(1402) in 16S rRNA + S-adenosyl-L-methionine = N(4)-methylcytidine(1402) in 16S rRNA + S-adenosyl-L-homocysteine + H(+). Functionally, specifically methylates the N4 position of cytidine in position 1402 (C1402) of 16S rRNA. The protein is Ribosomal RNA small subunit methyltransferase H of Aliivibrio salmonicida (strain LFI1238) (Vibrio salmonicida (strain LFI1238)).